Here is an 830-residue protein sequence, read N- to C-terminus: MVEEGVRVVRCGGSRLNFRRAVFSVDSKYIFCVSGDFVKVYSTTTEECVHILHGHTDLVSGILVNPSNHLQLYSCSFDGTIKLWDYVDGILIKTFTIGPKLHAFFIPLHAEDSVFLTISKEEPDIFQLVSVKLPKSTSQDVEARQLTFVLDYINRSPKCIAFGNEGEYVAAVRDFYLSVYFFKKKKTCNFTLPSTKNKKNAKNKFTCVACHPKEDCIASGHMDGKIRLWRNFHSDQKYTYTCLHWHHDMVMDLAFTVTGTSLLSGGRECVLVEWRDGSEKNKEFLPRLGSSIEHISVSPAGDLFCTSHSDNKITVIHRNLDASAVIQGLVKDRSISTGLMVDPRTKALVLNGKPGHLQFYSLQGDKQLYNLDIIQQEYINDEGLTQTELTKAAFGCSGTWLATVEQRQENENELELQMKLWNYSKKTQGFVLNTKIAMPHDDHITALCFNNAESYEKPILVTASRDGHFKVWILTDDSDIYKKAIAWTCDFVGSYHKYQATNCCFSEDGSLLAVSFEEIVTIWDSQTWELKCTFCQRAGKIRHLCFGRLTCSKYLLGTTDNGILCCWNLLSCSIQWSAKLNVRVMEPDPYSDHVAAVAQSSAGSDLFVFKPSEPRPLYIQKNVSREEVQWGVFVPRDVPESFTSETHQWLNRSQFYFLTKSQSLLTFSTKSPEEKLTPTSKQLLAEESLPTTPFSFILGKHRQQQGAKLTETSENELVQLPLTENIPAITELLHTPAHVLPSASFLCSLFVNSLLLSKETKSAEEVPDDVDMEGNKESDDSDEEYDLTEKDKETNNNTDLGEDAIHQLSKSEEKELRKFRKVDYSWLTAL.

9 WD repeats span residues 4 to 42 (EGVR…KVYS), 46 to 85 (EECV…KLWD), 89 to 130 (GILI…QLVS), 144 to 183 (RQLT…YFFK), 192 to 230 (LPST…RLWR), 236 to 275 (QKYT…VEWR), 278 to 317 (SEKN…TVIH), 323 to 361 (SAVI…QFYS), and 375 to 422 (QQEY…KLWN). A Glycyl lysine isopeptide (Lys-Gly) (interchain with G-Cter in SUMO2) cross-link involves residue Lys426. WD repeat units follow at residues 429 to 473 (GFVL…KVWI), 486 to 524 (AWTC…TIWD), 528 to 568 (WELK…CCWN), and 573 to 610 (SIQW…FVFK). Residues Ser663 and Ser671 each carry the phosphoserine modification. Lys675 is covalently cross-linked (Glycyl lysine isopeptide (Lys-Gly) (interchain with G-Cter in SUMO2)). The disordered stretch occupies residues 761–807 (KSAEEVPDDVDMEGNKESDDSDEEYDLTEKDKETNNNTDLGEDAIHQ). Phosphoserine occurs at positions 778 and 781. Phosphotyrosine is present on Tyr785. Ser811 carries the post-translational modification Phosphoserine.

Component of the proposed t-UTP subcomplex of the ribosomal small subunit (SSU) processome. SSU processome is composed of more than 70 proteins and the RNA chaperone small nucleolar RNA (snoRNA) U3.

The protein localises to the nucleus. It is found in the nucleolus. Its function is as follows. Ribosome biogenesis factor. Part of the small subunit (SSU) processome, first precursor of the small eukaryotic ribosomal subunit. During the assembly of the SSU processome in the nucleolus, many ribosome biogenesis factors, an RNA chaperone and ribosomal proteins associate with the nascent pre-rRNA and work in concert to generate RNA folding, modifications, rearrangements and cleavage as well as targeted degradation of pre-ribosomal RNA by the RNA exosome. Involved in nucleolar processing of pre-18S ribosomal RNA. Required for optimal pre-ribosomal RNA transcription by RNA polymerase I. The chain is WD repeat-containing protein 75 (Wdr75) from Mus musculus (Mouse).